The primary structure comprises 733 residues: Polyribonucleotide nucleotidyltransferase (733 aa).

Positions 489 and 495 each coordinate Mg(2+). Residues 556-615 (PKIDTIKIDVDKIKIVIGKGGETIDKIIAETGVKIDIDEEGNVSIYSSDQDAINRAKEII) enclose the KH domain. An S1 motif domain is found at 625 to 693 (DEVYHAKVVR…AKGRVDASMK (69 aa)). The tract at residues 691–733 (SMKVLLPRPPKSDKPKHHHDKGHHPHKEYKGHKDHQESPKTEE) is disordered. Over residues 704–723 (KPKHHHDKGHHPHKEYKGHK) the composition is skewed to basic residues. The span at 724-733 (DHQESPKTEE) shows a compositional bias: basic and acidic residues.

Belongs to the polyribonucleotide nucleotidyltransferase family. It depends on Mg(2+) as a cofactor.

Its subcellular location is the cytoplasm. The enzyme catalyses RNA(n+1) + phosphate = RNA(n) + a ribonucleoside 5'-diphosphate. In terms of biological role, involved in mRNA degradation. Catalyzes the phosphorolysis of single-stranded polyribonucleotides processively in the 3'- to 5'-direction. The chain is Polyribonucleotide nucleotidyltransferase from Streptococcus sanguinis (strain SK36).